The sequence spans 209 residues: Putative tripartite motif-containing protein 61 (209 aa).

The segment at 16-57 adopts an RING-type zinc-finger fold; it reads CPICLDYLKDPVTISCGHNFCLSCIIMSWKDLHDSFPCPFCH. The B box-type zinc-finger motif lies at 92-133; sequence EEKHVCKKHNQVLTFFCQKDLELLCPRCSLSTDHQHHCVWPI. Zn(2+) is bound by residues Cys97, His100, Cys119, and His125.

This is Putative tripartite motif-containing protein 61 (TRIM61) from Homo sapiens (Human).